We begin with the raw amino-acid sequence, 353 residues long: Peptide chain release factor 1 (353 aa).

Gln230 carries the N5-methylglutamine modification.

This sequence belongs to the prokaryotic/mitochondrial release factor family. In terms of processing, methylated by PrmC. Methylation increases the termination efficiency of RF1.

It is found in the cytoplasm. Its function is as follows. Peptide chain release factor 1 directs the termination of translation in response to the peptide chain termination codons UAG and UAA. This Gluconobacter oxydans (strain 621H) (Gluconobacter suboxydans) protein is Peptide chain release factor 1.